The primary structure comprises 412 residues: MSSKGSVVLAYSGGLDTSCILVWLKEQGYDVIAYLANIGQKEDFEEARKKALKLGAKKVFIEDVSREFVEEFIWPAIQSSALYEDRYLLGTSLARPCIARKQVEIAQREGAKYVSHGATGKGNDQVRFELSCYSLAPQIKVIAPWRMPEFYNRFKGRNDLMEYAKQHGIPIPVTPKNPWSMDENLMHISYEAGILENPKNQAPPGLYTKTQDPAKAPNTPDILEIEFKKGVPVKVTNVKDGTTHQTSLELFMYLNEVAGKHGVGRIDIVENRFIGMKSRGIYETPAGTILYHAHLDIEAFTMDREVRKIKQGLGLKFAELVYTGFWHSPECEFVRHCIAKSQERVEGKVQVSVLKGQVYILGRESPLSLYNEELVSMNVQGDYEPTDATGFININSLRLKEYHRLQSKVTAK.

ATP contacts are provided by residues Ala10 to Ser18 and Ala36. L-citrulline-binding residues include Tyr87 and Ser92. At Tyr87 the chain carries Phosphotyrosine. An N6-acetyllysine modification is found at Lys112. Phosphotyrosine is present on Tyr113. Ser115–Asn123 provides a ligand contact to ATP. L-aspartate-binding residues include Thr119, Asn123, and Asp124. L-citrulline is bound at residue Asn123. Arg127 provides a ligand contact to L-citrulline. N6-acetyllysine; by CLOCK is present on residues Lys165 and Lys176. Residues Ser180 and Ser189 each coordinate L-citrulline. Phosphoserine is present on Ser180. The residue at position 219 (Thr219) is a Phosphothreonine. Positions 270 and 282 each coordinate L-citrulline.

This sequence belongs to the argininosuccinate synthase family. Type 1 subfamily. In terms of assembly, homotetramer. Interacts with NMRAL1. Interacts with CLOCK; in a circadian manner. Forms tissue-specific complexes with ASL, SLC7A1, HSP90AA1 and nitric oxide synthase NOS1, NOS2 or NOS3; the complex regulates cell-autonomous L-arginine synthesis and citrulline recycling while channeling extracellular L-arginine to nitric oxide synthesis pathway. Post-translationally, acetylated by CLOCK in a circadian manner which negatively regulates its enzyme activity. Deacetylated by histone deacetylases. As to expression, expressed in adult liver.

Its subcellular location is the cytoplasm. It is found in the cytosol. It catalyses the reaction L-citrulline + L-aspartate + ATP = 2-(N(omega)-L-arginino)succinate + AMP + diphosphate + H(+). Its pathway is amino-acid biosynthesis; L-arginine biosynthesis; L-arginine from L-ornithine and carbamoyl phosphate: step 2/3. It participates in nitrogen metabolism; urea cycle; (N(omega)-L-arginino)succinate from L-aspartate and L-citrulline: step 1/1. In terms of biological role, one of the enzymes of the urea cycle, the metabolic pathway transforming neurotoxic amonia produced by protein catabolism into inocuous urea in the liver of ureotelic animals. Catalyzes the formation of arginosuccinate from aspartate, citrulline and ATP and together with ASL it is responsible for the biosynthesis of arginine in most body tissues. In Homo sapiens (Human), this protein is Argininosuccinate synthase.